The following is a 161-amino-acid chain: Cyclic pyranopterin monophosphate synthase (161 aa).

Substrate contacts are provided by residues 75–77 (MCH) and 115–116 (ME). The active site involves Asp130.

This sequence belongs to the MoaC family. In terms of assembly, homohexamer; trimer of dimers.

It catalyses the reaction (8S)-3',8-cyclo-7,8-dihydroguanosine 5'-triphosphate = cyclic pyranopterin phosphate + diphosphate. It functions in the pathway cofactor biosynthesis; molybdopterin biosynthesis. Functionally, catalyzes the conversion of (8S)-3',8-cyclo-7,8-dihydroguanosine 5'-triphosphate to cyclic pyranopterin monophosphate (cPMP). The polypeptide is Cyclic pyranopterin monophosphate synthase (Bacillus mycoides (strain KBAB4) (Bacillus weihenstephanensis)).